The sequence spans 255 residues: Protein BEAN1 (255 aa).

Residues 37 to 57 form a helical membrane-spanning segment; it reads VLVASAVIGVVITLSCITIIV. Basic residues predominate over residues 69 to 90; that stretch reads QRHHHRHRRHHHHHRHRRRRHR. 2 disordered regions span residues 69-109 and 160-255; these read QRHH…MPYA and DAPP…ERIV. Polar residues predominate over residues 193–206; sequence QRTQGQSRLHTVSM. A compositionally biased stretch (low complexity) spans 217–226; that stretch reads GTGSPSDLLP. Positions 234–243 are enriched in polar residues; it reads PSNSQGSPIP. Residues 244–255 show a composition bias toward pro residues; sequence TQAPMPSPERIV.

As to quaternary structure, interacts with NEDD4.

The protein resides in the membrane. In Mus musculus (Mouse), this protein is Protein BEAN1 (Bean1).